The primary structure comprises 904 residues: MFHRPASVRRFVTTAVALGLLSTLSTGARAGARTHEPPPRPTTVSSTAGSTTALTGYAIQSTAKVTDPAAAVSSPGYPASGWYPAGARSTVLAALLAGGKYADPFYSTNQQKIPKADFQVPWWYRSDFTVADTSARTYLDFSGVISAADVFVNGRQIARSADVAGAYTRHELDVTSLVREGANTVAFRIQPNNPNKNLTMGWIDWLEPPPDQNMGIVRDVLVRRGGPVALRDAHVITRLDVPSLATADLTVKARARNDSDAAITATVSGSVGATSFRRSVALAAHETKTVTFTPADTPGLHLTSPRVWWPAGMGGQPLYALDLSASVSETVSDTVHESFGIRDVKAPLNSDGARQYSVNGRRLLIKGGGWSPDEFLRWDSTYVEDRLRYALDLGLNTIRLEGHIEPDEFFDLADRYGILTLPGWECCNKWEGNVNGSGSGDEWTAADYPVAKASMAAEAARLRDHPSVVSFLIGSDFAPDAKIEKTYLDALKAADWPTPVVAAASDKSSPVSGSSGMKMTGPYDWIPPNYWYAKREGGATGFNSETSAGPDIPTLDTLRRMMTPAELDTLWKNPGAKQYHRSPSSVFGTLKIYDAALAGRYGAPTGLTDYVRKAQLAQYENVRAQFEAYGRGATDASKPATGVIYWMFNSGWTSLHWQLLDRYLDQGGAYFGAKKANEPLHVQYSYDDRSVVVVNNRPAAVSGLTARVTLFNTDGTQKYDKSATGLSVAGDGAHSTALTLPSSVSGLSTTYLARLVLTDSAGKEVSRNVYWLSTRPDTLDWAHTDWYYTPTTSYADLKGLGSMARVPVSATASTTAGTDGASTTTVTVRNTGSGRTPSLFTDVHLVDSKGKPVLPVQWSDNEVSLWPGESATLTVTYRTADLHGSAPRVRVSGWNTAEQTVPAA.

An N-terminal signal peptide occupies residues 1–32; it reads MFHRPASVRRFVTTAVALGLLSTLSTGARAGA. Residues 28-49 are disordered; the sequence is ARAGARTHEPPPRPTTVSSTAG. Aspartate 476 serves as the catalytic Proton donor. The active-site Nucleophile is the glutamate 545. A compositionally biased stretch (low complexity) spans 813 to 828; that stretch reads STTAGTDGASTTTVTV. The tract at residues 813–833 is disordered; that stretch reads STTAGTDGASTTTVTVRNTGS.

It belongs to the glycosyl hydrolase 2 family. In terms of assembly, monomer.

Its subcellular location is the secreted. The catalysed reaction is Hydrolysis of chitosan or chitosan oligosaccharides to remove successive D-glucosamine residues from the non-reducing termini.. In terms of biological role, hydrolyzes chitosan and chitooligosaccharides with retention of anomeric configuration. Has no beta-mannosidase activity. The sequence is that of Exo-beta-D-glucosaminidase from Streptomyces avermitilis (strain ATCC 31267 / DSM 46492 / JCM 5070 / NBRC 14893 / NCIMB 12804 / NRRL 8165 / MA-4680).